We begin with the raw amino-acid sequence, 394 residues long: Cell division protein FtsZ (394 aa).

Residues 21–25 (GGGNN), 108–110 (GTG), E139, R143, and D187 each bind GTP. Positions 317-394 (DKPSSQGRKA…EERRSRRTRR (78 aa)) are disordered. Composition is skewed to low complexity over residues 328–346 (STGFGSSVNSSSNHQSGAS) and 353–364 (SAHTSHSQSSES). Positions 365–388 (VNERSHTTKDDDIPSFIRNREERR) are enriched in basic and acidic residues.

This sequence belongs to the FtsZ family. In terms of assembly, homodimer. Polymerizes to form a dynamic ring structure in a strictly GTP-dependent manner. Interacts directly with several other division proteins.

The protein localises to the cytoplasm. In terms of biological role, essential cell division protein that forms a contractile ring structure (Z ring) at the future cell division site. The regulation of the ring assembly controls the timing and the location of cell division. One of the functions of the FtsZ ring is to recruit other cell division proteins to the septum to produce a new cell wall between the dividing cells. Binds GTP and shows GTPase activity. This is Cell division protein FtsZ from Staphylococcus epidermidis (strain ATCC 12228 / FDA PCI 1200).